Reading from the N-terminus, the 353-residue chain is UPF0283 membrane protein YcjF (353 aa).

3 helical membrane-spanning segments follow: residues 70–90 (MVMG…VQWT), 100–120 (VALG…GSVV), and 213–233 (ESTL…FIAW).

Belongs to the UPF0283 family.

The protein resides in the cell inner membrane. The sequence is that of UPF0283 membrane protein YcjF from Shigella sonnei (strain Ss046).